Consider the following 224-residue polypeptide: 7-cyano-7-deazaguanine synthase (224 aa).

12–22 (LSGGLDSSTVT) contacts ATP. The Zn(2+) site is built by cysteine 193, cysteine 201, cysteine 204, and cysteine 207.

The protein belongs to the QueC family. Zn(2+) is required as a cofactor.

The catalysed reaction is 7-carboxy-7-deazaguanine + NH4(+) + ATP = 7-cyano-7-deazaguanine + ADP + phosphate + H2O + H(+). The protein operates within purine metabolism; 7-cyano-7-deazaguanine biosynthesis. In terms of biological role, catalyzes the ATP-dependent conversion of 7-carboxy-7-deazaguanine (CDG) to 7-cyano-7-deazaguanine (preQ(0)). The protein is 7-cyano-7-deazaguanine synthase of Prochlorococcus marinus (strain MIT 9515).